The following is a 162-amino-acid chain: Peptide methionine sulfoxide reductase MsrA (162 aa).

The active site involves cysteine 16.

Belongs to the MsrA Met sulfoxide reductase family.

It carries out the reaction L-methionyl-[protein] + [thioredoxin]-disulfide + H2O = L-methionyl-(S)-S-oxide-[protein] + [thioredoxin]-dithiol. The catalysed reaction is [thioredoxin]-disulfide + L-methionine + H2O = L-methionine (S)-S-oxide + [thioredoxin]-dithiol. Functionally, has an important function as a repair enzyme for proteins that have been inactivated by oxidation. Catalyzes the reversible oxidation-reduction of methionine sulfoxide in proteins to methionine. This Geobacter metallireducens (strain ATCC 53774 / DSM 7210 / GS-15) protein is Peptide methionine sulfoxide reductase MsrA.